Reading from the N-terminus, the 285-residue chain is Casein kinase II subunit beta-2 (285 aa).

Residues 226–285 (FKDAEDEAELDDDDEEEEEEEEEEEELAAMDEAEGAQQQHAAAAAGTATGGVAAGGEGVH) form a disordered region. Residues 229-259 (AEDEAELDDDDEEEEEEEEEEEELAAMDEAE) show a composition bias toward acidic residues. Over residues 260-272 (GAQQQHAAAAAGT) the composition is skewed to low complexity. Residues 273–285 (ATGGVAAGGEGVH) are compositionally biased toward gly residues.

It belongs to the casein kinase 2 subunit beta family. As to quaternary structure, tetramer composed of two alpha chains, one beta chain and one beta' chain. Post-translationally, phosphorylated by alpha subunit.

Its function is as follows. Regulatory subunit of casein kinase II/CK2. As part of the kinase complex regulates the basal catalytic activity of the alpha subunit a constitutively active serine/threonine-protein kinase that phosphorylates a large number of substrates containing acidic residues C-terminal to the phosphorylated serine or threonine. This is Casein kinase II subunit beta-2 (ckb-2) from Neurospora crassa (strain ATCC 24698 / 74-OR23-1A / CBS 708.71 / DSM 1257 / FGSC 987).